The chain runs to 1058 residues: Bromodomain-containing protein 1 (1058 aa).

Over residues 1 to 12 (MRRKGRCHRGSA) the composition is skewed to basic residues. Positions 1 to 25 (MRRKGRCHRGSAARHPSSPCSIKHS) are disordered. The segment at 31–80 (LTYAQAQRMVEIEIEGRLHRISIFDPLEIILEDDLTAQEMSECNSNKENS) is interaction with KAT7/HBO1 and histones. S128 carries the phosphoserine modification. The PHD-type 1 zinc-finger motif lies at 214 to 264 (DAVCCICMDGECQNSNVILFCDMCNLAVHQECYGVPYIPEGQWLCRHCLQS). The C2HC pre-PHD-type zinc finger occupies 268–301 (PADCVLCPNKGGAFKKTDDDRWGHVVCALWIPEV). Residues 325–389 (LTCYLCKQKG…RKTAYCDVHT (65 aa)) form a PHD-type 2 zinc finger. K368, K516, and K519 each carry N6-acetyllysine. Residues K554 and K594 each participate in a glycyl lysine isopeptide (Lys-Gly) (interchain with G-Cter in SUMO2) cross-link. Residues 562-666 (LRLTPLTVLL…DQGGVVLRQA (105 aa)) enclose the Bromo domain. Polar residues predominate over residues 754–763 (KLSQQHSQAP). 2 disordered regions span residues 754–776 (KLSQ…EDEA) and 791–847 (LETL…AAPR). At S803 the chain carries Phosphoserine. At K903 the chain carries N6-acetyllysine. Residues 929–1012 (PLKVVWAKCS…KSKMVPLGVD (84 aa)) enclose the PWWP domain. Phosphoserine is present on residues S1052 and S1055.

Component of some HBO1 complexes composed of KAT7/HBO1, MEAF6, ING4 and BRD1/BRPF2. Component of the MOZ/MORF complex composed at least of ING5, KAT6A, KAT6B, MEAF6 and one of BRPF1, BRD1/BRPF2 and BRPF3. Interacts (via PHD-type zinc finger domain) with unmodified histone H3. Interacts (via PWWP domain) with dimethylated and trimethylated 'Lys-79' on histone H3.

It localises to the nucleus. It is found in the chromosome. Its function is as follows. Scaffold subunit of various histone acetyltransferase (HAT) complexes, such as the MOZ/MORF and HBO1 complexes, that acts as a regulator of hematopoiesis. Plays a key role in HBO1 complex by directing KAT7/HBO1 specificity towards histone H3 'Lys-14' acetylation (H3K14ac), thereby promoting erythroid differentiation. The sequence is that of Bromodomain-containing protein 1 from Mus musculus (Mouse).